A 391-amino-acid chain; its full sequence is Argininosuccinate synthase (391 aa).

6–14 (AYSGGLDTT) lines the ATP pocket. Y84 contacts L-citrulline. G114 contributes to the ATP binding site. The L-aspartate site is built by T116, N120, and D121. N120 lines the L-citrulline pocket. Residues R124, S171, S180, E253, and Y265 each coordinate L-citrulline.

Belongs to the argininosuccinate synthase family. Type 1 subfamily. As to quaternary structure, homotetramer.

The protein localises to the cytoplasm. It carries out the reaction L-citrulline + L-aspartate + ATP = 2-(N(omega)-L-arginino)succinate + AMP + diphosphate + H(+). The protein operates within amino-acid biosynthesis; L-arginine biosynthesis; L-arginine from L-ornithine and carbamoyl phosphate: step 2/3. The polypeptide is Argininosuccinate synthase (Sulfolobus acidocaldarius (strain ATCC 33909 / DSM 639 / JCM 8929 / NBRC 15157 / NCIMB 11770)).